Consider the following 114-residue polypeptide: TYRO protein tyrosine kinase-binding protein (114 aa).

Positions 1–21 (MGALEPSWCLLFLPVLLTVGG) are cleaved as a signal peptide. Residues 22 to 42 (LSPVQAQSDTFPRCDCSSVSP) are Extracellular-facing. A helical transmembrane segment spans residues 43 to 63 (GVLAGIVLGDLVLTLLIALAV). Asp52 contributes to the Ca(2+) binding site. Topologically, residues 64-114 (YSLGRLVSRGQGTAEGTRKQHIAETESPYQELQGQRPEVYSDLNTQRQYYR) are cytoplasmic. Residues 74-107 (QGTAEGTRKQHIAETESPYQELQGQRPEVYSDLN) are disordered. The region spanning 81-109 (RKQHIAETESPYQELQGQRPEVYSDLNTQ) is the ITAM domain. Phosphotyrosine is present on residues Tyr92 and Tyr103.

The protein belongs to the TYROBP family. Homodimer; disulfide-linked. Homotrimer; disulfide-linked. Homotetramer; disulfide-linked. Homotrimers and homotetramers form when low levels of partner receptors are available and are competitive with assembly with interacting receptors. They may represent alternative oligomerization states or may be intermediates in the receptor assembly process. Binding of a metal cation aids in homooligomerization through coordination of the metal ion by the subunits of the oligomer. Interacts with TREM1. Interacts with TREM2. Interacts with TREM3. Interacts with CLECSF5. Interacts with CD300LB and CD300C2. Interacts with CD300E. Interacts (via ITAM domain) with SYK (via SH2 domains); activates SYK mediating neutrophil and macrophage integrin-mediated activation. Interacts (via transmembrane domain) with KLRK1 isoform 2 (via transmembrane domain); the interaction is required for KLRK1 NK cell surface expression and NK cell-mediated cytotoxicity. Interacts with KLRC2. Interacts with CD300H. Interacts with KLRD1. Interacts with KLRA4 and KLRA8. Tyrosine phosphorylated. Following ligand binding by associated receptors, tyrosine phosphorylated in the ITAM domain which leads to activation of additional tyrosine kinases and subsequent cell activation. As to expression, expressed on microglia (at protein level). Expressed on oligodendrocytes (at protein level). Expressed on macrophages and osteoclasts. Expressed on dendritic cells in liver, spleen, kidney and lung with highest levels in liver dendritic cells.

The protein localises to the cell membrane. In terms of biological role, adapter protein which non-covalently associates with activating receptors found on the surface of a variety of immune cells to mediate signaling and cell activation following ligand binding by the receptors. TYROBP is tyrosine-phosphorylated in the ITAM domain following ligand binding by the associated receptors which leads to activation of additional tyrosine kinases and subsequent cell activation. Also has an inhibitory role in some cells. Non-covalently associates with activating receptors of the CD300 family to mediate cell activation. Also mediates cell activation through association with activating receptors of the CD200R family. Required for neutrophil activation mediated by integrin. Required for the activation of myeloid cells mediated by the CLEC5A/MDL1 receptor. Associates with natural killer (NK) cell receptors such as the KLRD1/KLRC2 heterodimer to mediate NK cell activation. Also associates non-covalently with the NK cell receptors KLRA4/LY49D and KLRA8/LY49H which leads to NK cell activation. Associates with TREM1 to mediate activation of neutrophils and monocytes. Associates with TREM2 on monocyte-derived dendritic cells to mediate up-regulation of chemokine receptor CCR7 and dendritic cell maturation and survival. Association with TREM2 mediates cytokine-induced formation of multinucleated giant cells which are formed by the fusion of macrophages. Stabilizes the TREM2 C-terminal fragment (TREM2-CTF) which is produced by TREM2 ectodomain shedding. In microglia, required with TREM2 for phagocytosis of apoptotic neurons. Required with ITGAM/CD11B in microglia to control production of microglial superoxide ions which promote the neuronal apoptosis that occurs during brain development. Promotes pro-inflammatory responses in microglia following nerve injury which accelerates degeneration of injured neurons. Positively regulates the expression of the IRAK3/IRAK-M kinase and IL10 production by liver dendritic cells and inhibits their T cell allostimulatory ability. Negatively regulates B cell proliferation. Required for CSF1-mediated osteoclast cytoskeletal organization. Positively regulates multinucleation during osteoclast development. This chain is TYRO protein tyrosine kinase-binding protein, found in Mus musculus (Mouse).